The following is a 398-amino-acid chain: 1-deoxy-D-xylulose 5-phosphate reductoisomerase (398 aa).

Thr-11, Gly-12, Ser-13, Ile-14, Arg-38, Asn-39, and Asn-125 together coordinate NADPH. Lys-126 contributes to the 1-deoxy-D-xylulose 5-phosphate binding site. Glu-127 contributes to the NADPH binding site. Asp-151 lines the Mn(2+) pocket. The 1-deoxy-D-xylulose 5-phosphate site is built by Ser-152, Glu-153, Ser-179, and His-202. Glu-153 provides a ligand contact to Mn(2+). Gly-208 lines the NADPH pocket. Residues Ser-215, Asn-220, Lys-221, and Glu-224 each contribute to the 1-deoxy-D-xylulose 5-phosphate site. Glu-224 is a Mn(2+) binding site.

Belongs to the DXR family. Mg(2+) is required as a cofactor. It depends on Mn(2+) as a cofactor.

The catalysed reaction is 2-C-methyl-D-erythritol 4-phosphate + NADP(+) = 1-deoxy-D-xylulose 5-phosphate + NADPH + H(+). It functions in the pathway isoprenoid biosynthesis; isopentenyl diphosphate biosynthesis via DXP pathway; isopentenyl diphosphate from 1-deoxy-D-xylulose 5-phosphate: step 1/6. Functionally, catalyzes the NADPH-dependent rearrangement and reduction of 1-deoxy-D-xylulose-5-phosphate (DXP) to 2-C-methyl-D-erythritol 4-phosphate (MEP). The chain is 1-deoxy-D-xylulose 5-phosphate reductoisomerase from Burkholderia lata (strain ATCC 17760 / DSM 23089 / LMG 22485 / NCIMB 9086 / R18194 / 383).